Reading from the N-terminus, the 1412-residue chain is MPN domain-containing protein CG4751 (1412 aa).

The span at 1–10 (MENGVEHGVD) shows a compositional bias: basic and acidic residues. The segment at 1-123 (MENGVEHGVD…TKENYEGFNG (123 aa)) is disordered. Composition is skewed to acidic residues over residues 23–35 (GEGD…EVEG) and 103–114 (SDAGDEDNDDET). The RAMA domain maps to 113–219 (ETKENYEGFN…AYKNTYLRKC (107 aa)). In terms of domain architecture, MPN spans 284 to 420 (ITVNSSALLL…LESVVKCIWI (137 aa)). Zn(2+)-binding residues include histidine 361, histidine 363, and aspartate 374. Disordered stretches follow at residues 554–589 (INPP…QKAS), 669–734 (SALN…DIAR), 853–891 (GGSG…NSYK), 1027–1066 (SIPP…QQQQ), 1271–1318 (MKPP…NSGG), 1330–1376 (SSVP…SGGV), and 1389–1412 (LAAP…LSHD). Residues 572–600 (SGRKAEEESNAQAEQKASELKVMSLQEQL) are a coiled coil. 6 positions are modified to phosphoserine: serine 699, serine 701, serine 705, serine 719, serine 723, and serine 728. The segment covering 702 to 720 (PAKSDTSSHASTSRTRNSP) has biased composition (polar residues). 2 stretches are compositionally biased toward low complexity: residues 873–891 (KSSS…NSYK) and 1036–1066 (SSGS…QQQQ). Residues 1275-1290 (KSTTPSSARTRESSAS) are compositionally biased toward polar residues. 2 positions are modified to phosphoserine: serine 1288 and serine 1290. Phosphothreonine is present on threonine 1297. A compositionally biased stretch (low complexity) spans 1360–1370 (LYGELAPPGAL).

This sequence belongs to the peptidase M67 family.

In terms of biological role, probable protease. In Drosophila melanogaster (Fruit fly), this protein is MPN domain-containing protein CG4751.